The chain runs to 281 residues: Peptidyl-prolyl cis-trans isomerase CYP28, chloroplastic (281 aa).

A chloroplast-targeting transit peptide spans 1–24; it reads MASSSILIPPILTRRNLLLSTTIA. The region spanning 66 to 268 is the PPIase cyclophilin-type domain; the sequence is STTPCSDSTP…KTVFISGCGE (203 aa).

This sequence belongs to the cyclophilin-type PPIase family. S-nytrosylated during the hypersensitive disease resistance response. As to expression, ubiquitous. Not detected in roots.

Its subcellular location is the plastid. It is found in the chloroplast. The enzyme catalyses [protein]-peptidylproline (omega=180) = [protein]-peptidylproline (omega=0). PPIases accelerate the folding of proteins. It catalyzes the cis-trans isomerization of proline imidic peptide bonds in oligopeptides. The polypeptide is Peptidyl-prolyl cis-trans isomerase CYP28, chloroplastic (CYP28) (Arabidopsis thaliana (Mouse-ear cress)).